Reading from the N-terminus, the 512-residue chain is Cytochrome P450 monooxygenase ABA1 (512 aa).

A helical transmembrane segment spans residues 13–32 (HWLSGILAIATVYLATSYII). Residue Cys458 participates in heme binding.

Belongs to the cytochrome P450 family. Heme serves as cofactor.

It localises to the membrane. It functions in the pathway hormone biosynthesis. Its function is as follows. Cytochrome P450 monooxygenase involved in the biosynthesis of abscisic acid (ABA), a phytohormone that acts antagonistically toward salicylic acid (SA), jasmonic acid (JA) and ethylene (ETH) signaling, to impede plant defense responses. During pathogen-host interaction, ABA plays a dual role in disease severity by increasing plant susceptibility and accelerating pathogenesis in the fungus itself. The first step of the pathway catalyzes the reaction from farnesyl diphosphate to alpha-ionylideneethane performed by the alpha-ionylideneethane synthase ABA3 via a three-step reaction mechanism involving 2 neutral intermediates, beta-farnesene and allofarnesene. The cytochrome P450 monooxygenase ABA1 might then be involved in the conversion of alpha-ionylideneethane to alpha-ionylideneacetic acid. Alpha-ionylideneacetic acid is further converted to abscisic acid in 2 steps involving the cytochrome P450 monooxygenase ABA2 and the short-chain dehydrogenase/reductase ABA4, via the intermediates 1'-deoxy-ABA or 1',4'-trans-diol-ABA, depending on the order of action of these 2 enzymes. ABA2 is responsible for the hydroxylation of carbon atom C-1' and ABA4 might be involved in the oxidation of the C-4' carbon atom. The sequence is that of Cytochrome P450 monooxygenase ABA1 from Pyricularia oryzae (strain Y34) (Rice blast fungus).